The sequence spans 155 residues: Transcription antitermination protein NusB (155 aa).

It belongs to the NusB family.

Its function is as follows. Involved in transcription antitermination. Required for transcription of ribosomal RNA (rRNA) genes. Binds specifically to the boxA antiterminator sequence of the ribosomal RNA (rrn) operons. In Vibrio campbellii (strain ATCC BAA-1116), this protein is Transcription antitermination protein NusB.